A 79-amino-acid polypeptide reads, in one-letter code: Defensin-like protein 3 (79 aa).

Residues 1–29 (MAKFASIITLLFAALVVFAAFEAPTMVEA) form the signal peptide. 4 disulfide bridges follow: Cys-32/Cys-79, Cys-43/Cys-64, Cys-49/Cys-73, and Cys-53/Cys-75.

Belongs to the DEFL family.

Its subcellular location is the secreted. In terms of biological role, possesses antifungal activity sensitive to inorganic cations. This Brassica napus (Rape) protein is Defensin-like protein 3 (AFP3).